Consider the following 399-residue polypeptide: MRIEPLIQGVVARSAHPYGCHASIKEQIEYVKKAPKIKSGPKRVLIIGASSGFGLAARIALTFGGAEADTIGVSFERGPSEKGVGSAGWYNNIFFKQEATHAGRTAINIVGDAFSDSVRNEVIEAIETYFEGEVDLVIYSLAAGVRPKPHSDTFWRSVIKPIGESVTGASILLENDQWVETTLEPATEEEAEATIKVMGGEDWESWIDTLINTESVAQGCKTIAFSYMGPEVTHPIYLDGTLGRAKIDLHQTSHALNLKLANFDGGAYATVCKALVTKASVFIPALSPYLLALYRVMKEKGTHERCIEQMQRLFTTKLYDQPKVPVDGERLIRIDDLELDPQTQAEVSHLLEQMNTENFKECGDYQGFKDEFMKLNGFNFDDVDYSQDISLETLASLKP.

NAD(+)-binding positions include 48 to 53 (GASSGF), 75 to 76 (FE), 112 to 113 (DA), and 141 to 142 (LA). Y227 provides a ligand contact to substrate. Y237 serves as the catalytic Proton donor. NAD(+) contacts are provided by residues K246 and 275–277 (LVT).

It belongs to the TER reductase family. Monomer.

It carries out the reaction a 2,3-saturated acyl-[ACP] + NAD(+) = a (2E)-enoyl-[ACP] + NADH + H(+). Its pathway is lipid metabolism; fatty acid biosynthesis. In terms of biological role, involved in the final reduction of the elongation cycle of fatty acid synthesis (FAS II). Catalyzes the reduction of a carbon-carbon double bond in an enoyl moiety that is covalently linked to an acyl carrier protein (ACP). This chain is Enoyl-[acyl-carrier-protein] reductase [NADH] 2, found in Vibrio parahaemolyticus serotype O3:K6 (strain RIMD 2210633).